Consider the following 387-residue polypeptide: Migration and invasion-inhibitory protein (387 aa).

Residues 50–59 (NLEMPLSQET) are compositionally biased toward polar residues. Disordered regions lie at residues 50 to 80 (NLEMPLSQETSSASSVAPSSQDKRHMLDPLD) and 133 to 172 (VSLGGPKGLGPDKTQVPRSILSRLSKPSKPRVTSQESAVP). The segment covering 60–69 (SSASSVAPSS) has biased composition (low complexity). The span at 70–80 (QDKRHMLDPLD) shows a compositional bias: basic and acidic residues. Phosphoserine is present on Ser307.

As to quaternary structure, interacts with IGFBP2.

Inhibits glioma cells invasion and down-regulates adhesion- and motility-associated genes such as NFKB2 and ICAM1. Exhibits opposing effects to IGFBP2 on cell invasion. The polypeptide is Migration and invasion-inhibitory protein (Miip) (Mus musculus (Mouse)).